A 299-amino-acid chain; its full sequence is MWFKQISFYPLNKEKLPEADVLADKLAEAEFTHCQGLDWFSEGFTAPVSFSPELVFPADFTLRVALKKEEKVLPAGVIRDILEEKVAEIQNNEARNVGRKEKQELKEQITDDLLPRAFTRSSRTEAVFNTRHGYLLVNNAASAKAENILTKLREALGGLEASLPNTKQSPSSLMTGWLLQGHCEGGFELDSDCELKGTGDIVPVVKVSKQDLTADEVVQHVKNGKTVTQLGLVWREQIAFILTQDFTLKRIQYLDVLQEEAESNGDDAAGLAFASQILMAESVSIMLEELVSYLGGWQD.

Belongs to the RdgC family.

It is found in the cytoplasm. The protein resides in the nucleoid. Its function is as follows. May be involved in recombination. The protein is Recombination-associated protein RdgC of Neisseria meningitidis serogroup A / serotype 4A (strain DSM 15465 / Z2491).